The sequence spans 312 residues: uncharacterized protein (312 aa).

This is an uncharacterized protein from Mycoplasma (Bacteriophage L2).